A 222-amino-acid polypeptide reads, in one-letter code: Phosphoribosylformylglycinamidine synthase subunit PurQ (222 aa).

The Glutamine amidotransferase type-1 domain occupies 3–222 (SAVVLLPGLN…LFEGALGIAA (220 aa)). Cys-86 (nucleophile) is an active-site residue. Residues His-196 and Glu-198 contribute to the active site.

As to quaternary structure, part of the FGAM synthase complex composed of 1 PurL, 1 PurQ and 2 PurS subunits.

It localises to the cytoplasm. The catalysed reaction is N(2)-formyl-N(1)-(5-phospho-beta-D-ribosyl)glycinamide + L-glutamine + ATP + H2O = 2-formamido-N(1)-(5-O-phospho-beta-D-ribosyl)acetamidine + L-glutamate + ADP + phosphate + H(+). It carries out the reaction L-glutamine + H2O = L-glutamate + NH4(+). The protein operates within purine metabolism; IMP biosynthesis via de novo pathway; 5-amino-1-(5-phospho-D-ribosyl)imidazole from N(2)-formyl-N(1)-(5-phospho-D-ribosyl)glycinamide: step 1/2. Functionally, part of the phosphoribosylformylglycinamidine synthase complex involved in the purines biosynthetic pathway. Catalyzes the ATP-dependent conversion of formylglycinamide ribonucleotide (FGAR) and glutamine to yield formylglycinamidine ribonucleotide (FGAM) and glutamate. The FGAM synthase complex is composed of three subunits. PurQ produces an ammonia molecule by converting glutamine to glutamate. PurL transfers the ammonia molecule to FGAR to form FGAM in an ATP-dependent manner. PurS interacts with PurQ and PurL and is thought to assist in the transfer of the ammonia molecule from PurQ to PurL. This Mesorhizobium japonicum (strain LMG 29417 / CECT 9101 / MAFF 303099) (Mesorhizobium loti (strain MAFF 303099)) protein is Phosphoribosylformylglycinamidine synthase subunit PurQ.